We begin with the raw amino-acid sequence, 78 residues long: Large ribosomal subunit protein bL28 (78 aa).

This sequence belongs to the bacterial ribosomal protein bL28 family.

This chain is Large ribosomal subunit protein bL28, found in Francisella philomiragia subsp. philomiragia (strain ATCC 25017 / CCUG 19701 / FSC 153 / O#319-036).